Reading from the N-terminus, the 265-residue chain is Ribosomal RNA small subunit methyltransferase A (265 aa).

S-adenosyl-L-methionine contacts are provided by H13, L15, G40, E61, D85, and N103.

It belongs to the class I-like SAM-binding methyltransferase superfamily. rRNA adenine N(6)-methyltransferase family. RsmA subfamily.

The protein localises to the cytoplasm. The catalysed reaction is adenosine(1518)/adenosine(1519) in 16S rRNA + 4 S-adenosyl-L-methionine = N(6)-dimethyladenosine(1518)/N(6)-dimethyladenosine(1519) in 16S rRNA + 4 S-adenosyl-L-homocysteine + 4 H(+). Its function is as follows. Specifically dimethylates two adjacent adenosines (A1518 and A1519) in the loop of a conserved hairpin near the 3'-end of 16S rRNA in the 30S particle. May play a critical role in biogenesis of 30S subunits. This chain is Ribosomal RNA small subunit methyltransferase A, found in Bordetella pertussis (strain Tohama I / ATCC BAA-589 / NCTC 13251).